We begin with the raw amino-acid sequence, 137 residues long: Small heat shock protein IbpA (137 aa).

In terms of domain architecture, sHSP spans 28 to 137; it reads SQSNGGYPPY…ANKPRRIEIN (110 aa).

The protein belongs to the small heat shock protein (HSP20) family. In terms of assembly, monomer. Forms homomultimers of about 100-150 subunits at optimal growth temperatures. Conformation changes to monomers at high temperatures or high ionic concentrations.

It localises to the cytoplasm. Its function is as follows. Associates with aggregated proteins, together with IbpB, to stabilize and protect them from irreversible denaturation and extensive proteolysis during heat shock and oxidative stress. Aggregated proteins bound to the IbpAB complex are more efficiently refolded and reactivated by the ATP-dependent chaperone systems ClpB and DnaK/DnaJ/GrpE. Its activity is ATP-independent. In Salmonella choleraesuis (strain SC-B67), this protein is Small heat shock protein IbpA.